The sequence spans 96 residues: Integration host factor subunit beta (96 aa).

This sequence belongs to the bacterial histone-like protein family. As to quaternary structure, heterodimer of an alpha and a beta chain.

Its function is as follows. This protein is one of the two subunits of integration host factor, a specific DNA-binding protein that functions in genetic recombination as well as in transcriptional and translational control. The polypeptide is Integration host factor subunit beta (Methylocella silvestris (strain DSM 15510 / CIP 108128 / LMG 27833 / NCIMB 13906 / BL2)).